We begin with the raw amino-acid sequence, 883 residues long: Alanine--tRNA ligase (883 aa).

Zn(2+) contacts are provided by His-563, His-567, Cys-677, and His-681.

It belongs to the class-II aminoacyl-tRNA synthetase family. Zn(2+) serves as cofactor.

It is found in the cytoplasm. It catalyses the reaction tRNA(Ala) + L-alanine + ATP = L-alanyl-tRNA(Ala) + AMP + diphosphate. Its function is as follows. Catalyzes the attachment of alanine to tRNA(Ala) in a two-step reaction: alanine is first activated by ATP to form Ala-AMP and then transferred to the acceptor end of tRNA(Ala). Also edits incorrectly charged Ser-tRNA(Ala) and Gly-tRNA(Ala) via its editing domain. The sequence is that of Alanine--tRNA ligase from Cereibacter sphaeroides (strain ATCC 17025 / ATH 2.4.3) (Rhodobacter sphaeroides).